A 67-amino-acid polypeptide reads, in one-letter code: Large ribosomal subunit protein uL29 (67 aa).

The protein belongs to the universal ribosomal protein uL29 family.

This Heliobacterium modesticaldum (strain ATCC 51547 / Ice1) protein is Large ribosomal subunit protein uL29.